Reading from the N-terminus, the 77-residue chain is MATVIRLTKMGRKKKPFYRIVVTDSRKKRDGGWIESLGYYNPLVEPALVKYDAQRLEYWKNVGAKMSERVAKLTSKK.

The protein belongs to the bacterial ribosomal protein bS16 family.

The sequence is that of Small ribosomal subunit protein bS16 from Helicobacter hepaticus (strain ATCC 51449 / 3B1).